Consider the following 126-residue polypeptide: Profilin-1 (126 aa).

This sequence belongs to the profilin family. In terms of assembly, occurs in many kinds of cells as a complex with monomeric actin in a 1:1 ratio.

The protein localises to the cytoplasm. It is found in the cytoskeleton. Its function is as follows. Binds to actin and affects the structure of the cytoskeleton. At high concentrations, profilin prevents the polymerization of actin, whereas it enhances it at low concentrations. By binding to PIP2, it inhibits the formation of IP3 and DG. The chain is Profilin-1 (proA) from Dictyostelium discoideum (Social amoeba).